Here is a 333-residue protein sequence, read N- to C-terminus: Terpene synthase 2 (333 aa).

Residues 82–87 carry the DDxx(x)D/E motif motif; sequence DDDLDT. An NDxxSxxxD/E motif motif is present at residues 219–227; sequence NDCVSYAKE.

This sequence belongs to the terpene synthase family.

The catalysed reaction is (2E,6E)-farnesyl diphosphate = (E)-beta-farnesene + diphosphate. The enzyme catalyses (2E,6E)-farnesyl diphosphate = (1S,2S,4R)-beta-elemene + diphosphate. Terpene synthase that converts its substrate farnesyl diphosphate (FPP) into the sesquiterpene (E)-beta-farnesene as major product. Is also able to convert FPP into delta-elemene, beta-elemene, (E)-beta-caryophyllene, 9-epi-(E)-caryophyllene, and a yet unidentified sesquiterpene. The protein is Terpene synthase 2 of Dictyostelium purpureum (Slime mold).